The sequence spans 367 residues: Histidinol-phosphate aminotransferase 1 (367 aa).

Lys229 is subject to N6-(pyridoxal phosphate)lysine.

The protein belongs to the class-II pyridoxal-phosphate-dependent aminotransferase family. Histidinol-phosphate aminotransferase subfamily. Homodimer. It depends on pyridoxal 5'-phosphate as a cofactor.

The enzyme catalyses L-histidinol phosphate + 2-oxoglutarate = 3-(imidazol-4-yl)-2-oxopropyl phosphate + L-glutamate. It functions in the pathway amino-acid biosynthesis; L-histidine biosynthesis; L-histidine from 5-phospho-alpha-D-ribose 1-diphosphate: step 7/9. This is Histidinol-phosphate aminotransferase 1 from Idiomarina loihiensis (strain ATCC BAA-735 / DSM 15497 / L2-TR).